Consider the following 72-residue polypeptide: Mitochondrial import protein 2 (72 aa).

The disordered stretch occupies residues 1–22 (MAEVLDLEIDPISDGEDDTYSS). Residues 1 to 34 (MAEVLDLEIDPISDGEDDTYSSELDDDLKDSIEQ) lie on the Cytoplasmic side of the membrane. Residues 35-52 (LERVLCLVVFPLLGKFLG) form a helical membrane-spanning segment. Topologically, residues 53–72 (RKFAFHAWARWLERRRLVSN) are mitochondrial intermembrane.

The protein belongs to the MIM2 family. As to quaternary structure, component of the mitochondrial outer import machinery (MIM) complex containing at least mim1 and mim2. Interacts with mim1. Interacts with mitophagy receptor atg43.

It is found in the mitochondrion outer membrane. In terms of biological role, component of the mitochondrial outer import machinery (MIM) complex that mediates transport of proteins into mitochondrial compartments. Promotes the insertion of tom70 into the outer mitochondrial membrane. Promotes the insertion of atg43 into the outer mitochondrial membrane. Involved in import of the subset of proteins with multiple alpha-helical transmembrane segments. The polypeptide is Mitochondrial import protein 2 (Schizosaccharomyces pombe (strain 972 / ATCC 24843) (Fission yeast)).